Here is a 480-residue protein sequence, read N- to C-terminus: Na(+)/H(+) antiporter NhaA (480 aa).

11 consecutive transmembrane segments (helical) span residues 34-54 (VGGVLLLVATVTALVWANIPA), 76-96 (LSVAHWAADGLLAVFFFVAGI), 113-133 (AVLPVVAALCGMAVPALVYTL), 144-164 (GWAVPTATDIAFALAVLAVIG), 174-194 (FLLTLAVVDDLFAILIIAIFF), 197-217 (RINFAALGGAVAGLAVFWLLL), 223-243 (GWYVYVPLAVVVWALMYNSGV), 282-302 (GLAVPLFALFSAGVVVSGGAL), 312-332 (LGVVLGLVVGKTLGIFGSTWL), 350-370 (IFAVASLAGIGFTVSLLIGEL), and 381-401 (EVKAAVLTGSLIAALCATVLL). A disordered region spans residues 454 to 480 (AAEKAAAARHGGAEVPGGAGEEDGRPA).

The protein belongs to the NhaA Na(+)/H(+) (TC 2.A.33) antiporter family.

It is found in the cell membrane. The catalysed reaction is Na(+)(in) + 2 H(+)(out) = Na(+)(out) + 2 H(+)(in). Functionally, na(+)/H(+) antiporter that extrudes sodium in exchange for external protons. The polypeptide is Na(+)/H(+) antiporter NhaA (Streptomyces antibioticus).